The following is a 61-amino-acid chain: Large ribosomal subunit protein uL30 (61 aa).

This sequence belongs to the universal ribosomal protein uL30 family. As to quaternary structure, part of the 50S ribosomal subunit.

The sequence is that of Large ribosomal subunit protein uL30 from Frankia alni (strain DSM 45986 / CECT 9034 / ACN14a).